The following is a 457-amino-acid chain: Peptidyl-prolyl cis-trans isomerase FKBP5 (457 aa).

Met-1 carries the N-acetylmethionine modification. The disordered stretch occupies residues 1 to 26 (MTTDEGAKNSRGNPAATVAEQGEDVT). Lys-28 carries the N6-acetyllysine modification. 2 consecutive PPIase FKBP-type domains span residues 50 to 138 (GDRV…LDFK) and 165 to 251 (GARV…KSFE). TPR repeat units follow at residues 268 to 301 (AAIVKEKGTVYFKGGKYVQAVIQYGKIVSWLEME), 317 to 350 (LAAFLNLAMCYLKLREYTKAVECCDKALGLDSAN), and 351 to 384 (EKGLYRRGEAQLLMNEFESAKGDFEKVLEVNPQN). The disordered stretch occupies residues 421–457 (AKEEANKAMSKKTSEGVTNEKLTASHAVEEEKPEGHV). At Ser-445 the chain carries Phosphoserine. Positions 447–457 (AVEEEKPEGHV) are enriched in basic and acidic residues.

As to quaternary structure, part of a heteromultimeric cytoplasmic complex with HSP90AA1, HSPA1A/HSPA1B and steroid receptors. Upon ligand binding dissociates from the complex and FKBP4 takes its place. Interacts with functionally mature heterooligomeric progesterone receptor complexes along with HSP90 and TEBP. Interacts with NR3C1. Interacts with Akt/AKT1 and PHLPP1; enhancing dephosphorylation and subsequent activation of Akt/AKT1. Interacts with IFI44L; this interaction modulates the kinase activity of IKBKB and IKBKE. Interacts with IKBKB and IKBKE. Acetylation impairs ability to promote interaction between Akt/AKT1 and PHLPP1. Deacetylation by SIRT7 promotes interaction between Akt/AKT1 and PHLPP1, leading to suppress Akt/AKT1 activation. In terms of processing, ubiquitinated, leading to degradation in a proteasome-dependent manner. Deubiquitinated by USP49, leading to stabilization.

It is found in the cytoplasm. The protein resides in the nucleus. The enzyme catalyses [protein]-peptidylproline (omega=180) = [protein]-peptidylproline (omega=0). Inhibited by both FK506 and rapamycin. In terms of biological role, immunophilin protein with PPIase and co-chaperone activities. Component of unligated steroid receptors heterocomplexes through interaction with heat-shock protein 90 (HSP90). Plays a role in the intracellular trafficking of heterooligomeric forms of steroid hormone receptors maintaining the complex into the cytoplasm when unliganded. Acts as a regulator of Akt/AKT1 activity by promoting the interaction between Akt/AKT1 and PHLPP1, thereby enhancing dephosphorylation and subsequent activation of Akt/AKT1. Interacts with IKBKE and IKBKB which facilitates IKK complex assembly leading to increased IKBKE and IKBKB kinase activity, NF-kappaB activation, and IFN production. The chain is Peptidyl-prolyl cis-trans isomerase FKBP5 (FKBP5) from Saimiri boliviensis boliviensis (Bolivian squirrel monkey).